Reading from the N-terminus, the 177-residue chain is ATP-dependent protease subunit HslV (177 aa).

T2 is a catalytic residue. Na(+) contacts are provided by G157, C160, and T163.

This sequence belongs to the peptidase T1B family. HslV subfamily. In terms of assembly, a double ring-shaped homohexamer of HslV is capped on each side by a ring-shaped HslU homohexamer. The assembly of the HslU/HslV complex is dependent on binding of ATP.

The protein localises to the cytoplasm. The catalysed reaction is ATP-dependent cleavage of peptide bonds with broad specificity.. With respect to regulation, allosterically activated by HslU binding. In terms of biological role, protease subunit of a proteasome-like degradation complex believed to be a general protein degrading machinery. This is ATP-dependent protease subunit HslV from Aeromonas hydrophila subsp. hydrophila (strain ATCC 7966 / DSM 30187 / BCRC 13018 / CCUG 14551 / JCM 1027 / KCTC 2358 / NCIMB 9240 / NCTC 8049).